The primary structure comprises 61 residues: uncharacterized protein (61 aa).

Belongs to the DUP/COS family.

This is an uncharacterized protein from Saccharomyces cerevisiae (strain ATCC 204508 / S288c) (Baker's yeast).